Consider the following 57-residue polypeptide: Three-finger toxin Tschuditoxin-I (57 aa).

3 disulfide bridges follow: Cys3-Cys22, Cys17-Cys39, and Cys41-Cys52.

As to expression, expressed by the venom gland.

The protein localises to the secreted. Produces peripheral paralysis by blocking neuromuscular transmission at the postsynaptic site. Binds to and inhibits the endogenous nicotinic acetylcholine receptors (nAChR). This neurotoxin is lethal to mice by intraperitoneal or intravenous injection. This chain is Three-finger toxin Tschuditoxin-I, found in Micrurus tschudii (Desert coral snake).